The primary structure comprises 456 residues: tRNA modification GTPase MnmE (456 aa).

Residues Arg25, Glu82, and Lys121 each contribute to the (6S)-5-formyl-5,6,7,8-tetrahydrofolate site. The TrmE-type G domain occupies 217-379; sequence GMKVVIAGRP…LKAHLKSVMG (163 aa). Asn227 is a K(+) binding site. GTP contacts are provided by residues 227-232, 246-252, and 271-274; these read NAGKSS, TNIAGTT, and DTAG. Ser231 is a binding site for Mg(2+). Residues Thr246, Ile248, and Thr251 each contribute to the K(+) site. Thr252 is a binding site for Mg(2+). Lys456 is a (6S)-5-formyl-5,6,7,8-tetrahydrofolate binding site.

This sequence belongs to the TRAFAC class TrmE-Era-EngA-EngB-Septin-like GTPase superfamily. TrmE GTPase family. As to quaternary structure, homodimer. Heterotetramer of two MnmE and two MnmG subunits. K(+) serves as cofactor.

It is found in the cytoplasm. In terms of biological role, exhibits a very high intrinsic GTPase hydrolysis rate. Involved in the addition of a carboxymethylaminomethyl (cmnm) group at the wobble position (U34) of certain tRNAs, forming tRNA-cmnm(5)s(2)U34. The protein is tRNA modification GTPase MnmE of Saccharophagus degradans (strain 2-40 / ATCC 43961 / DSM 17024).